We begin with the raw amino-acid sequence, 431 residues long: Glutamate--tRNA ligase 1 (431 aa).

The short motif at Pro-6–Asn-16 is the 'HIGH' region element. The short motif at Lys-235–Arg-239 is the 'KMSKS' region element. ATP is bound at residue Lys-238.

Belongs to the class-I aminoacyl-tRNA synthetase family. Glutamate--tRNA ligase type 1 subfamily. As to quaternary structure, monomer.

It is found in the cytoplasm. It carries out the reaction tRNA(Glu) + L-glutamate + ATP = L-glutamyl-tRNA(Glu) + AMP + diphosphate. Functionally, catalyzes the attachment of glutamate to tRNA(Glu) in a two-step reaction: glutamate is first activated by ATP to form Glu-AMP and then transferred to the acceptor end of tRNA(Glu). The polypeptide is Glutamate--tRNA ligase 1 (Campylobacter concisus (strain 13826)).